A 149-amino-acid chain; its full sequence is MRAVVQRVLKGSVTVNNEVVGKIGQGLVVLLGVGQGDCVDDARYLADKISQLRIFDDEQGKLNLSIQDVKGSILAISQFTLYGDCRKGRRPGYSGAAAPDTARELYESFVQRLVCNGLTTSTGVFQEHMVVEIINDGPVTLLLDSRKGF.

The short motif at 137–138 (GP) is the Gly-cisPro motif, important for rejection of L-amino acids element.

It belongs to the DTD family. In terms of assembly, homodimer.

It localises to the cytoplasm. The catalysed reaction is glycyl-tRNA(Ala) + H2O = tRNA(Ala) + glycine + H(+). It carries out the reaction a D-aminoacyl-tRNA + H2O = a tRNA + a D-alpha-amino acid + H(+). In terms of biological role, an aminoacyl-tRNA editing enzyme that deacylates mischarged D-aminoacyl-tRNAs. Also deacylates mischarged glycyl-tRNA(Ala), protecting cells against glycine mischarging by AlaRS. Acts via tRNA-based rather than protein-based catalysis; rejects L-amino acids rather than detecting D-amino acids in the active site. By recycling D-aminoacyl-tRNA to D-amino acids and free tRNA molecules, this enzyme counteracts the toxicity associated with the formation of D-aminoacyl-tRNA entities in vivo and helps enforce protein L-homochirality. This is D-aminoacyl-tRNA deacylase from Desulforamulus reducens (strain ATCC BAA-1160 / DSM 100696 / MI-1) (Desulfotomaculum reducens).